Reading from the N-terminus, the 112-residue chain is MELNAFTILQIAVFIAVGYHANTHSPVAGSEVQKLTSDPNDDIDVSYCGMNCTVVNGKSDECSENCKCLHEGDDPKGICVAITYFGDWGDPNDDPKINEATPQTQIFEKKRK.

An N-terminal signal peptide occupies residues 1–23; that stretch reads MELNAFTILQIAVFIAVGYHANT. Cystine bridges form between C48/C66, C52/C68, and C62/C79. The N-linked (GlcNAc...) asparagine glycan is linked to N51. The interval 89–112 is disordered; that stretch reads GDPNDDPKINEATPQTQIFEKKRK.

The protein localises to the secreted. Salivary chemokine-binding protein which binds to host chemokine CXCL8. In Ixodes ricinus (Common tick), this protein is Evasin P1095.